Reading from the N-terminus, the 358-residue chain is Ion-translocating oxidoreductase complex subunit D (358 aa).

7 helical membrane passes run 16–36, 38–58, 68–90, 128–148, 206–226, 236–256, and 286–306; these read VSRT…FGLW, FGWP…VFEV, IRPF…TLPP, AMLV…VGLL, FVPG…GLLL, IPLA…FLAP, and PVTT…VFVI.

Belongs to the NqrB/RnfD family. As to quaternary structure, the complex is composed of six subunits: RnfA, RnfB, RnfC, RnfD, RnfE and RnfG. It depends on FMN as a cofactor.

The protein resides in the cellular chromatophore membrane. Functionally, part of a membrane-bound complex that couples electron transfer with translocation of ions across the membrane. Required for nitrogen fixation. Involved in electron transfer to nitrogenase. This Rhodobacter capsulatus (Rhodopseudomonas capsulata) protein is Ion-translocating oxidoreductase complex subunit D.